Consider the following 630-residue polypeptide: Golgi apyrase (630 aa).

At 1 to 500 (MLIENTNDRF…RKQSSSLSNK (500 aa)) the chain is on the lumenal side. Glu152 serves as the catalytic Proton acceptor. Residues 501-517 (GFLMWFAIICCIFYLIF) form a helical membrane-spanning segment. At 518–630 (HRSHIIRRRF…SKFKDSRLYD (113 aa)) the chain is on the cytoplasmic side. The segment at 586 to 606 (SSATMQREHEPQRTASQSANL) is disordered.

It belongs to the GDA1/CD39 NTPase family. Interacts with activator subunit VMA13 of vacuolar H(+)-ATPase. Interacts with CDC55; this interaction is disrupted by adenovirus E4orf4, which remains associated with both YND1 and CDC55. Ca(2+) serves as cofactor. The cofactor is Mg(2+). It depends on Mn(2+) as a cofactor.

It localises to the golgi apparatus. The protein resides in the membrane. It catalyses the reaction a ribonucleoside 5'-triphosphate + 2 H2O = a ribonucleoside 5'-phosphate + 2 phosphate + 2 H(+). The protein operates within protein modification; protein glycosylation. Activity is inhibited both by interaction with VMA13 and by V-ATPase acidification of the lumen. The activity of VMA13 is not required for YND1 inhibition. Its function is as follows. Catalyzes the hydrolysis of phosphoanhydride bonds of nucleoside tri- and di-phosphates. Has equal high activity toward ADP/ATP, GDP/GTP, and UDP/UTP and approximately 50% less toward CDP/CTP and thiamine pyrophosphate. Has no activity toward GMP. Required for Golgi glycosylation and cell wall integrity. Together with CDC55, required for adenovirus E4orf4 (early region 4 open reading frame 4) induced toxicity, the apyrase activity is not required for this function. Plays a role in sphingolipid synthesis. In Saccharomyces cerevisiae (strain ATCC 204508 / S288c) (Baker's yeast), this protein is Golgi apyrase (YND1).